The following is a 144-amino-acid chain: Large ribosomal subunit protein uL15 (144 aa).

The disordered stretch occupies residues 1–53 (MRLNSLSPAEGAKHSAKRLGRGIGSGLGKTGGRGHKGQKSRTGGGVRRGFEGG). A compositionally biased stretch (gly residues) spans 21–31 (RGIGSGLGKTG).

It belongs to the universal ribosomal protein uL15 family. In terms of assembly, part of the 50S ribosomal subunit.

Functionally, binds to the 23S rRNA. This is Large ribosomal subunit protein uL15 from Glaesserella parasuis serovar 5 (strain SH0165) (Haemophilus parasuis).